Reading from the N-terminus, the 477-residue chain is tRNA-2-methylthio-N(6)-dimethylallyladenosine synthase (477 aa).

Residues 3–120 (KKLYIKTWGC…LPEMINELKG (118 aa)) enclose the MTTase N-terminal domain. Positions 12, 49, 83, 157, 161, and 164 each coordinate [4Fe-4S] cluster. A Radical SAM core domain is found at 143–375 (RAEGPTAFVS…QQRITQQALR (233 aa)). The TRAM domain occupies 378 to 441 (RHMVGTEQRI…TNSLRGEVVR (64 aa)).

It belongs to the methylthiotransferase family. MiaB subfamily. In terms of assembly, monomer. [4Fe-4S] cluster serves as cofactor.

It is found in the cytoplasm. The enzyme catalyses N(6)-dimethylallyladenosine(37) in tRNA + (sulfur carrier)-SH + AH2 + 2 S-adenosyl-L-methionine = 2-methylsulfanyl-N(6)-dimethylallyladenosine(37) in tRNA + (sulfur carrier)-H + 5'-deoxyadenosine + L-methionine + A + S-adenosyl-L-homocysteine + 2 H(+). Functionally, catalyzes the methylthiolation of N6-(dimethylallyl)adenosine (i(6)A), leading to the formation of 2-methylthio-N6-(dimethylallyl)adenosine (ms(2)i(6)A) at position 37 in tRNAs that read codons beginning with uridine. This chain is tRNA-2-methylthio-N(6)-dimethylallyladenosine synthase, found in Alteromonas mediterranea (strain DSM 17117 / CIP 110805 / LMG 28347 / Deep ecotype).